The primary structure comprises 341 residues: Farnesyl pyrophosphate synthase (341 aa).

Lysine 48, arginine 51, and glutamine 86 together coordinate isopentenyl diphosphate. Positions 93 and 97 each coordinate Mg(2+). A dimethylallyl diphosphate-binding site is contributed by arginine 102. Residue arginine 103 participates in isopentenyl diphosphate binding. Dimethylallyl diphosphate-binding residues include lysine 190, threonine 191, glutamine 229, and lysine 246.

This sequence belongs to the FPP/GGPP synthase family. It depends on Mg(2+) as a cofactor.

The protein resides in the cytoplasm. The catalysed reaction is isopentenyl diphosphate + dimethylallyl diphosphate = (2E)-geranyl diphosphate + diphosphate. It catalyses the reaction isopentenyl diphosphate + (2E)-geranyl diphosphate = (2E,6E)-farnesyl diphosphate + diphosphate. The protein operates within isoprenoid biosynthesis; farnesyl diphosphate biosynthesis; farnesyl diphosphate from geranyl diphosphate and isopentenyl diphosphate: step 1/1. It participates in isoprenoid biosynthesis; geranyl diphosphate biosynthesis; geranyl diphosphate from dimethylallyl diphosphate and isopentenyl diphosphate: step 1/1. Its function is as follows. Catalyzes the sequential condensation of isopentenyl pyrophosphate with the allylic pyrophosphates, dimethylallyl pyrophosphate, and then with the resultant geranylpyrophosphate to the ultimate product farnesyl pyrophosphate. The sequence is that of Farnesyl pyrophosphate synthase (FPS1) from Helianthus annuus (Common sunflower).